Reading from the N-terminus, the 276-residue chain is Potassium/proton antiporter CemA (276 aa).

The next 3 membrane-spanning stretches (helical) occupy residues 59 to 79 (LLLL…WIFG), 199 to 219 (FFII…GWEV), and 236 to 256 (FIFL…KYWI).

Belongs to the CemA family.

The protein localises to the plastid. The protein resides in the chloroplast inner membrane. It carries out the reaction K(+)(in) + H(+)(out) = K(+)(out) + H(+)(in). Contributes to K(+)/H(+) antiport activity by supporting proton efflux to control proton extrusion and homeostasis in chloroplasts in a light-dependent manner to modulate photosynthesis. Prevents excessive induction of non-photochemical quenching (NPQ) under continuous-light conditions. Indirectly promotes efficient inorganic carbon uptake into chloroplasts. This is Potassium/proton antiporter CemA from Cyanidioschyzon merolae (strain NIES-3377 / 10D) (Unicellular red alga).